A 1026-amino-acid chain; its full sequence is MRFFALFIYRPVATILIAAAITLCGILGFRLLPVAPLPQVDFPVIMVSASLPGASPETMASSVATPLERSLGRIAGVNEMTSSSSLGSTRIILEFNFDRDINGAARDVQAAINAAQSLLPGGMPSRPTYRKANPSDAPIMILTLTSESWSQGKLYDFASTQLAQTIAQIDGVGDVDVGGSSLPAVRVGLNPQALFNQGVSLDEVREAIDSANVRRPQGAIEDSVHRWQIQTNDELKTAAEYQPLIIHYNNGAAVRLGDVASVTDSVQDVRNAGMTNAKPAILLMIRKLPEANIIQTVDGIRAKLPELRAMIPAAIDLQIAQDRSPTIRASLQEVEETLVISVALVILVVFLFLRSGRATLIPAVAVPVSLIGTFAAMYLCGFSLNNLSLMALTIATGFVVDDAIVVLENIARHLEAGMKPLQAALQGTREVGFTVISMSLSLVAVFLPLLLMGGLPGRLLREFAVTLSVAIGISLVVSLTLTPMMCGWMLKSSKPRTQPRKRGVGRLLVALQQGYGTSLKWVLNHTRLVGVVFLGTVALNIWLYIAIPKTFFPEQDTGVLMGGIQADQSISFQAMRGKLQDFMKIIRDDPAVNNVTGFTGGSRVNSGMMFITLKPRGERKETAQQIIDRLRVKLAKEPGARLFLMAVQDIRVGGRQANASYQYTLLSDSLAALREWEPKIRKALSALPQLADVNSDQQDNGAEMNLIYDRDTMSRLGIDVQAANSLLNNAFGQRQISTIYQPMNQYKVVMEVDPRYSQDISALEKMFVINRDGKAIPLSYFAQWRPANAPLSVNHQGLSAASTIAFNLPTGTSLSQATEAINRTMTQLGVPPTVRGSFSGTAQVFQQTMNSQLILIVAAIATVYIVLGILYESYVHPLTILSTLPSAGVGALLALELFNAPFSLIALIGIMLLIGIVKKNAIMMVDFALEAQRSGGLTPEQAIFQACLLRFRPIMMTTLAALFGALPLVLSGGDGSELRQPLGITIVGGLVMSQLLTLYTTPVVYLFFDRLRRRFSRKNSKPVVEI.

The next 11 membrane-spanning stretches (helical) occupy residues 15–35 (ILIA…LPVA), 333–353 (EVEE…FLFL), 360–380 (LIPA…MYLC), 387–407 (LSLM…IVVL), 431–451 (VGFT…PLLL), 463–483 (FAVT…TLTP), 528–548 (LVGV…IAIP), 853–873 (LILI…LYES), 897–917 (LFNA…IGIV), 953–973 (PIMM…LSGG), and 984–1004 (ITIV…TPVV).

Belongs to the resistance-nodulation-cell division (RND) (TC 2.A.6) family. MdtC subfamily. In terms of assembly, part of a tripartite efflux system composed of MdtA, MdtB and MdtC. MdtC forms a heteromultimer with MdtB.

Its subcellular location is the cell inner membrane. This is Multidrug resistance protein MdtC from Salmonella schwarzengrund (strain CVM19633).